A 1207-amino-acid polypeptide reads, in one-letter code: DNA-directed RNA polymerase subunit beta' (1207 aa).

4 residues coordinate Zn(2+): Cys-60, Cys-62, Cys-75, and Cys-78. Positions 449, 451, and 453 each coordinate Mg(2+). Cys-822, Cys-896, Cys-903, and Cys-906 together coordinate Zn(2+).

It belongs to the RNA polymerase beta' chain family. The RNAP catalytic core consists of 2 alpha, 1 beta, 1 beta' and 1 omega subunit. When a sigma factor is associated with the core the holoenzyme is formed, which can initiate transcription. Requires Mg(2+) as cofactor. Zn(2+) is required as a cofactor.

It catalyses the reaction RNA(n) + a ribonucleoside 5'-triphosphate = RNA(n+1) + diphosphate. In terms of biological role, DNA-dependent RNA polymerase catalyzes the transcription of DNA into RNA using the four ribonucleoside triphosphates as substrates. This Staphylococcus epidermidis (strain ATCC 35984 / DSM 28319 / BCRC 17069 / CCUG 31568 / BM 3577 / RP62A) protein is DNA-directed RNA polymerase subunit beta'.